Consider the following 169-residue polypeptide: Macrocypin-1a (169 aa).

Belongs to the protease inhibitor I85 family.

Its function is as follows. Inhibits papain and cysteine cathepsin endopeptidases, and also inhibits cathepsins B and H, which exhibit both exopeptidase and endopeptidase activities. The sequence is that of Macrocypin-1a from Macrolepiota procera (Parasol mushroom).